Here is a 212-residue protein sequence, read N- to C-terminus: MNYPVEWRISDSPVDYPQAIAAMEERVAAIRAGTAPELVWLLEHPPLYSAGTSADPRDLVDPGRFPVYETGRGGQYTYHGPGQRVAYVLLDLKRRGADVRVYVCNLEEWLIRTLARFVVKGERRTGRVGIWVDRGGGREDKIAAIGVRVRHWVTFHGIALNVDPDLSHFEGIVPCGIREHGVTSLWDLGLTPTMDDVDCALMATFPEVFGAD.

The BPL/LPL catalytic domain maps to Gly-33–Asp-212. Substrate-binding positions include Arg-72–His-79, Ala-144–Gly-146, and Gly-157–Ala-159. Cys-175 (acyl-thioester intermediate) is an active-site residue.

It belongs to the LipB family.

The protein resides in the cytoplasm. It carries out the reaction octanoyl-[ACP] + L-lysyl-[protein] = N(6)-octanoyl-L-lysyl-[protein] + holo-[ACP] + H(+). It participates in protein modification; protein lipoylation via endogenous pathway; protein N(6)-(lipoyl)lysine from octanoyl-[acyl-carrier-protein]: step 1/2. In terms of biological role, catalyzes the transfer of endogenously produced octanoic acid from octanoyl-acyl-carrier-protein onto the lipoyl domains of lipoate-dependent enzymes. Lipoyl-ACP can also act as a substrate although octanoyl-ACP is likely to be the physiological substrate. The sequence is that of Octanoyltransferase from Paramagnetospirillum magneticum (strain ATCC 700264 / AMB-1) (Magnetospirillum magneticum).